A 125-amino-acid polypeptide reads, in one-letter code: RxLR effector protein Avh6 (125 aa).

The signal sequence occupies residues 1–25 (MRLSSTTFVVLAAVLLASGTAVSKA). Residues 48-70 (RFLRSHHTEDGEAKLSNYDNEER) carry the RxLR-dEER motif.

It belongs to the RxLR effector family.

The protein localises to the secreted. Its subcellular location is the host cell. Functionally, effector that suppresses plant defense responses during the early stages of pathogen infection. Suppresses cell death induced by effectors and PAMPs in plant hosts. Triggers a hypersensitive response (HR) in the presence of Rps1d. Suppresses BAX-induced cell death and enhan,ced P.capsici infection in Nicotiana benthamiana. Also suppresses effector-triggered immunity induction by associating with Avr1b and Rps1b, suggesting a role in suppressing plant immunity. The polypeptide is RxLR effector protein Avh6 (Phytophthora sojae (strain P6497) (Soybean stem and root rot agent)).